A 282-amino-acid polypeptide reads, in one-letter code: Cell division protein FtsQ (282 aa).

At 1-30 (MINIGPPKKRRLRRKGNRFKKTRRVIPWRR) the chain is on the cytoplasmic side. The helical transmembrane segment at 31–51 (LMIGALWGTMALASLGMVVAV) threads the bilayer. At 52–282 (ACFAGQMLFA…LDAGELRGKG (231 aa)) the chain is on the periplasmic side. The 69-residue stretch at 65–133 (FKVERIQVEN…DQLVIRVDER (69 aa)) folds into the POTRA domain.

It belongs to the FtsQ/DivIB family. FtsQ subfamily.

The protein resides in the cell inner membrane. Functionally, essential cell division protein. The chain is Cell division protein FtsQ from Syntrophotalea carbinolica (strain DSM 2380 / NBRC 103641 / GraBd1) (Pelobacter carbinolicus).